The sequence spans 309 residues: tRNA dimethylallyltransferase (309 aa).

9-16 (GPTAVGKT) contacts ATP. Residue 11-16 (TAVGKT) coordinates substrate. The interval 34 to 37 (DSMQ) is interaction with substrate tRNA.

The protein belongs to the IPP transferase family. Monomer. Mg(2+) is required as a cofactor.

The catalysed reaction is adenosine(37) in tRNA + dimethylallyl diphosphate = N(6)-dimethylallyladenosine(37) in tRNA + diphosphate. Functionally, catalyzes the transfer of a dimethylallyl group onto the adenine at position 37 in tRNAs that read codons beginning with uridine, leading to the formation of N6-(dimethylallyl)adenosine (i(6)A). The chain is tRNA dimethylallyltransferase from Enterococcus faecalis (strain ATCC 700802 / V583).